An 879-amino-acid chain; its full sequence is DNA methyltransferase A (879 aa).

Belongs to the methyltransferase superfamily.

The catalysed reaction is a 2'-deoxyadenosine in DNA + S-adenosyl-L-methionine = an N(6)-methyl-2'-deoxyadenosine in DNA + S-adenosyl-L-homocysteine + H(+). Its function is as follows. Recognizes the double-stranded sequence 5'-GACGAG-3' and methylates A-5, yielding m6A. m6A methylation functions as a transcriptional modifier, promoting transcription of a number of genes (at least scpA, hbs, rnhC, yumC and zapA). One studied mechanism is via transcriptional repressor ScoC (also called hpr) which binds to non-methylated scpA promoter; when the m6A target is methylated ScoC no longer binds and scpA transcription is up-regulated. Other mechanisms for gene expression regulation probably exist. Binds DNA with and without the target sequence. Although it resembles a restriction-modification system, it does not have detectable endonuclease activity under tested conditions. A gamma subtype methylase. The protein is DNA methyltransferase A of Bacillus subtilis (strain 168).